The chain runs to 52 residues: UPF0057 membrane protein YqaE (52 aa).

2 consecutive transmembrane segments (helical) span residues 1-21 and 23-43; these read MGFW…LLGK and FGWA…PGLI.

Belongs to the UPF0057 (PMP3) family.

The protein resides in the cell membrane. The protein is UPF0057 membrane protein YqaE (yqaE) of Escherichia coli O157:H7.